The following is a 151-amino-acid chain: Caveolin-3 (151 aa).

The Cytoplasmic portion of the chain corresponds to 1–83 (MMTEEHTDLE…RLLSTLLGVP (83 aa)). Lys38 participates in a covalent cross-link: Glycyl lysine isopeptide (Lys-Gly) (interchain with G-Cter in SUMO3). The required for interaction with DAG1 stretch occupies residues 64–114 (TFTVSKYWCYRLLSTLLGVPLALLWGFLFACISFCHIWAVVPCIKSYLIEI). An intramembrane region (helical) is located at residues 84 to 104 (LALLWGFLFACISFCHIWAVV). Residues 105 to 151 (PCIKSYLIEIQCISHIYSLCIRTFCNPLFAALGQVCSNIKVVLRREG) are Cytoplasmic-facing.

It belongs to the caveolin family. As to quaternary structure, homooligomer. Interacts with DYSF. Interacts with DLG1 and KCNA5; forms a ternary complex. Interacts with DAG1 (via its C-terminal); the interaction prevents binding of DAG1 with DMD. Interacts with TRIM72. Interacts with MUSK; may regulate MUSK signaling. Interacts with POPDC1. Interacts with CAVIN1, CAVIN2 and CAVIN4. In terms of processing, sumoylation with SUMO3 by PIAS4 may reduce agonist-induced internalization and desensitization of adrenergic receptor ABRD2. As to expression, expressed predominantly in muscle.

It is found in the golgi apparatus membrane. The protein resides in the cell membrane. It localises to the membrane. Its subcellular location is the caveola. The protein localises to the sarcolemma. Its function is as follows. May act as a scaffolding protein within caveolar membranes. Interacts directly with G-protein alpha subunits and can functionally regulate their activity. May also regulate voltage-gated potassium channels. Plays a role in the sarcolemma repair mechanism of both skeletal muscle and cardiomyocytes that permits rapid resealing of membranes disrupted by mechanical stress. Mediates the recruitment of CAVIN2 and CAVIN3 proteins to the caveolae. This is Caveolin-3 from Mus musculus (Mouse).